A 179-amino-acid polypeptide reads, in one-letter code: Peptidyl-tRNA hydrolase (179 aa).

Tyr-15 contributes to the tRNA binding site. His-20 functions as the Proton acceptor in the catalytic mechanism. Residues Tyr-66, Asn-68, and Asn-114 each contribute to the tRNA site.

The protein belongs to the PTH family. In terms of assembly, monomer.

The protein resides in the cytoplasm. It catalyses the reaction an N-acyl-L-alpha-aminoacyl-tRNA + H2O = an N-acyl-L-amino acid + a tRNA + H(+). In terms of biological role, hydrolyzes ribosome-free peptidyl-tRNAs (with 1 or more amino acids incorporated), which drop off the ribosome during protein synthesis, or as a result of ribosome stalling. Functionally, catalyzes the release of premature peptidyl moieties from peptidyl-tRNA molecules trapped in stalled 50S ribosomal subunits, and thus maintains levels of free tRNAs and 50S ribosomes. The chain is Peptidyl-tRNA hydrolase from Chlamydia trachomatis serovar L2 (strain ATCC VR-902B / DSM 19102 / 434/Bu).